The chain runs to 769 residues: CO(2)-response secreted protease (769 aa).

An N-terminal signal peptide occupies residues 1–27 (MKGITFFTPFLSFLYLLCILFMTETEA). The Inhibitor I9 domain maps to 35-108 (VYIVYMGSAS…VFPDPHFQLH (74 aa)). The region spanning 112–613 (SWDFLKYQTS…AGELSSTASM (502 aa)) is the Peptidase S8 domain. Active-site charge relay system residues include Asp-145 and His-210. One can recognise a PA domain in the interval 381–465 (ADASEGSARA…SKEAAEIFSY (85 aa)). Residue Ser-546 is the Charge relay system of the active site.

Belongs to the peptidase S8 family. As to expression, expressed in roots, guard cells and meristemoid and pavement cells.

It is found in the secreted. It localises to the cell wall. It carries out the reaction Release of an N-terminal tripeptide from a polypeptide.. Functionally, mediates CO(2)-controlled stomatal development by cleaving peptide EPF2 (AC Q8LC53). Not active on peptides EPF1 (AC Q8S8I4) or stomagen (AC Q9SV72). The protein is CO(2)-response secreted protease of Arabidopsis thaliana (Mouse-ear cress).